The primary structure comprises 435 residues: 5-methylthioadenosine/S-adenosylhomocysteine deaminase (435 aa).

Residues His65 and His67 each coordinate Zn(2+). Substrate is bound by residues Glu94, Arg150, and His189. Zn(2+) is bound at residue His216. 2 residues coordinate substrate: Glu219 and Asp304. Residue Asp304 coordinates Zn(2+).

Belongs to the metallo-dependent hydrolases superfamily. MTA/SAH deaminase family. The cofactor is Zn(2+).

It catalyses the reaction S-adenosyl-L-homocysteine + H2O + H(+) = S-inosyl-L-homocysteine + NH4(+). The enzyme catalyses S-methyl-5'-thioadenosine + H2O + H(+) = S-methyl-5'-thioinosine + NH4(+). In terms of biological role, catalyzes the deamination of 5-methylthioadenosine and S-adenosyl-L-homocysteine into 5-methylthioinosine and S-inosyl-L-homocysteine, respectively. Is also able to deaminate adenosine. The polypeptide is 5-methylthioadenosine/S-adenosylhomocysteine deaminase (Bacillus cytotoxicus (strain DSM 22905 / CIP 110041 / 391-98 / NVH 391-98)).